The following is a 130-amino-acid chain: Glycine cleavage system H protein (130 aa).

The Lipoyl-binding domain maps to Gln-22–Ala-103. Lys-63 is modified (N6-lipoyllysine).

This sequence belongs to the GcvH family. The glycine cleavage system is composed of four proteins: P, T, L and H. (R)-lipoate serves as cofactor.

Its function is as follows. The glycine cleavage system catalyzes the degradation of glycine. The H protein shuttles the methylamine group of glycine from the P protein to the T protein. This is Glycine cleavage system H protein from Syntrophomonas wolfei subsp. wolfei (strain DSM 2245B / Goettingen).